The sequence spans 119 residues: Large ribosomal subunit protein bL20 (119 aa).

Belongs to the bacterial ribosomal protein bL20 family.

Its function is as follows. Binds directly to 23S ribosomal RNA and is necessary for the in vitro assembly process of the 50S ribosomal subunit. It is not involved in the protein synthesizing functions of that subunit. In Gloeobacter violaceus (strain ATCC 29082 / PCC 7421), this protein is Large ribosomal subunit protein bL20.